Reading from the N-terminus, the 352-residue chain is Pre-rRNA-processing protein ipi1 (352 aa).

It belongs to the IPI1/TEX10 family. In terms of assembly, component of the RIX1 complex, composed of rrm-9/ipi1, rix1/ipi2 and ipi3 in a 1:2:2 stoichiometry. The complex interacts (via rix1) with mdn1 (via its hexameric AAA ATPase ring) and the pre-60S ribosome particles.

The protein localises to the nucleus. In terms of biological role, component of the RIX1 complex required for processing of ITS2 sequences from 35S pre-rRNA. This chain is Pre-rRNA-processing protein ipi1 (rrm-9), found in Neurospora crassa (strain ATCC 24698 / 74-OR23-1A / CBS 708.71 / DSM 1257 / FGSC 987).